Here is a 158-residue protein sequence, read N- to C-terminus: Cyclic pyranopterin monophosphate synthase (158 aa).

Residues 75-77 and 113-114 contribute to the substrate site; these read LCH and ME. Aspartate 128 is an active-site residue.

Belongs to the MoaC family. In terms of assembly, homohexamer; trimer of dimers.

The enzyme catalyses (8S)-3',8-cyclo-7,8-dihydroguanosine 5'-triphosphate = cyclic pyranopterin phosphate + diphosphate. It participates in cofactor biosynthesis; molybdopterin biosynthesis. Catalyzes the conversion of (8S)-3',8-cyclo-7,8-dihydroguanosine 5'-triphosphate to cyclic pyranopterin monophosphate (cPMP). In Vibrio campbellii (strain ATCC BAA-1116), this protein is Cyclic pyranopterin monophosphate synthase.